The following is a 206-amino-acid chain: MSKGSSTKKWLHEHTSDYYVIQANKLGYRSRASFKILEIQDKYQLFKPNMFVVDLGAAPGGWSEQVIKYIGKNGKLIALDLLEMAPIAGVEFIQGDFSSDETYQKLNTLVNNQKIDCVISDMAPNLSGNKTSDQAKSIYLLELALDFANTNLNKNGSFVAKVFQGQGSDEYLKLVRESFNKVIQFKPKSSRAKSREFYVIATEFKG.

S-adenosyl-L-methionine-binding residues include Gly60, Trp62, Asp80, Asp96, and Asp121. The active-site Proton acceptor is the Lys161.

Belongs to the class I-like SAM-binding methyltransferase superfamily. RNA methyltransferase RlmE family.

Its subcellular location is the cytoplasm. The catalysed reaction is uridine(2552) in 23S rRNA + S-adenosyl-L-methionine = 2'-O-methyluridine(2552) in 23S rRNA + S-adenosyl-L-homocysteine + H(+). Functionally, specifically methylates the uridine in position 2552 of 23S rRNA at the 2'-O position of the ribose in the fully assembled 50S ribosomal subunit. This chain is Ribosomal RNA large subunit methyltransferase E, found in Francisella tularensis subsp. tularensis (strain FSC 198).